Here is a 134-residue protein sequence, read N- to C-terminus: Beta-synuclein (134 aa).

Tandem repeats lie at residues 20-30 and 31-41. Positions 20–67 are 4 X 11 AA tandem repeats of [EGS]-K-T-K-[EQ]-[GQ]-V-X(4); sequence EKTKQGVTEAAEKTKEGVLYVGSKTREGVVQGVASVAEKTKEQASHLG. One copy of the 3; approximate repeat lies at 42–56; the sequence is SKTREGVVQGVASVA. The stretch at 57-67 is repeat 4; that stretch reads EKTKEQASHLG. The disordered stretch occupies residues 89 to 134; it reads FPTDLKPEEVAQEAAEEPLIEPLMEPEGESYEDPPQEEYQEYEPEA. Positions 98–134 are enriched in acidic residues; the sequence is VAQEAAEEPLIEPLMEPEGESYEDPPQEEYQEYEPEA. The residue at position 118 (Ser118) is a Phosphoserine; by BARK1, CK2 and GRK5.

It belongs to the synuclein family. In terms of processing, phosphorylated. Phosphorylation by G-protein coupled receptor kinases (GRK) is more efficient than phosphorylation by CK1, CK2 and CaM-kinase II. In terms of tissue distribution, expressed predominantly in brain; concentrated in presynaptic nerve terminals.

The protein localises to the cytoplasm. Non-amyloid component of senile plaques found in Alzheimer disease. Could act as a regulator of SNCA aggregation process. Protects neurons from staurosporine and 6-hydroxy dopamine (6OHDA)-stimulated caspase activation in a p53/TP53-dependent manner. Contributes to restore the SNCA anti-apoptotic function abolished by 6OHDA. Not found in the Lewy bodies associated with Parkinson disease. This chain is Beta-synuclein (SNCB), found in Homo sapiens (Human).